A 514-amino-acid polypeptide reads, in one-letter code: Peptide chain release factor 3 (514 aa).

The 261-residue stretch at 8–268 folds into the tr-type G domain; the sequence is KKRRTFAIIS…TFLEFAPEPH (261 aa). GTP is bound by residues 17–24, 85–89, and 139–142; these read SHPDAGKT, DTPGH, and NKLD.

Belongs to the TRAFAC class translation factor GTPase superfamily. Classic translation factor GTPase family. PrfC subfamily.

The protein resides in the cytoplasm. Increases the formation of ribosomal termination complexes and stimulates activities of RF-1 and RF-2. It binds guanine nucleotides and has strong preference for UGA stop codons. It may interact directly with the ribosome. The stimulation of RF-1 and RF-2 is significantly reduced by GTP and GDP, but not by GMP. The polypeptide is Peptide chain release factor 3 (Streptococcus pyogenes serotype M18 (strain MGAS8232)).